The sequence spans 76 residues: Virulence-associated protein VagC (76 aa).

Residues valine 4–proline 45 form the SpoVT-AbrB domain.

It belongs to the VapB family.

This Salmonella dublin protein is Virulence-associated protein VagC (vagC).